The following is a 220-amino-acid chain: Glycerol-3-phosphate acyltransferase (220 aa).

6 helical membrane-spanning segments follow: residues 11–31 (INVIFTLLGYLIGGIPFGYAL), 70–90 (LLVLILDLFKGMFAVFLSKLF), 96–116 (LQWMVAIASILGHCYSPFLNF), 127–147 (GSVVLLIPIESLIGLTVWFFV), 153–173 (ISSLASILGVGTATVLIFFVP), and 193–213 (MVLIFIFTLIKHAGNIFNLLA).

This sequence belongs to the PlsY family. As to quaternary structure, probably interacts with PlsX.

It localises to the cell inner membrane. The catalysed reaction is an acyl phosphate + sn-glycerol 3-phosphate = a 1-acyl-sn-glycero-3-phosphate + phosphate. It functions in the pathway lipid metabolism; phospholipid metabolism. Functionally, catalyzes the transfer of an acyl group from acyl-phosphate (acyl-PO(4)) to glycerol-3-phosphate (G3P) to form lysophosphatidic acid (LPA). This enzyme utilizes acyl-phosphate as fatty acyl donor, but not acyl-CoA or acyl-ACP. This Helicobacter pylori (strain ATCC 700392 / 26695) (Campylobacter pylori) protein is Glycerol-3-phosphate acyltransferase.